A 622-amino-acid polypeptide reads, in one-letter code: Apical membrane antigen 1 (622 aa).

Residues 1-24 (MRKLYCVLLLSAFEFTYMINFGRG) form the signal peptide. Residues 25–546 (QNYWEHPYQK…EHKPTYDKMK (522 aa)) lie on the Extracellular side of the membrane. Disulfide bonds link Cys-149-Cys-302, Cys-217-Cys-247, Cys-263-Cys-275, Cys-320-Cys-418, and Cys-337-Cys-409. Residue Asn-162 is glycosylated (N-linked (GlcNAc...) asparagine). N-linked (GlcNAc...) asparagine glycosylation is found at Asn-286, Asn-371, Asn-421, Asn-422, and Asn-499. Cystine bridges form between Cys-443/Cys-502, Cys-490/Cys-507, and Cys-492/Cys-509. Residues 547 to 567 (IIIASSAAVAVLATILMVYLY) form a helical membrane-spanning segment. Residues 568-622 (KRKGNAEKYDKMDEPQDYGKSNSRNDEMLDPEASFWGEEKRASHTTPVLMEKPYY) lie on the Cytoplasmic side of the membrane. The disordered stretch occupies residues 577 to 607 (DKMDEPQDYGKSNSRNDEMLDPEASFWGEEK).

This sequence belongs to the apicomplexan parasites AMA1 family.

The protein resides in the membrane. In terms of biological role, involved in parasite invasion of erythrocytes. This Plasmodium falciparum (isolate 7G8) protein is Apical membrane antigen 1 (AMA-1).